A 953-amino-acid polypeptide reads, in one-letter code: Probable isoleucine--tRNA ligase, cytoplasmic (953 aa).

The 'HIGH' region signature appears at 45–55 (PFATGLPHYGH). Positions 634-638 (KMSKR) match the 'KMSKS' region motif. Position 637 (K637) interacts with ATP.

It belongs to the class-I aminoacyl-tRNA synthetase family.

It is found in the cytoplasm. It carries out the reaction tRNA(Ile) + L-isoleucine + ATP = L-isoleucyl-tRNA(Ile) + AMP + diphosphate. The polypeptide is Probable isoleucine--tRNA ligase, cytoplasmic (Enterocytozoon bieneusi (strain H348) (Microsporidian parasite)).